The chain runs to 62 residues: Potassium channel toxin alpha-KTx Tx308 (62 aa).

Positions 1 to 18 (MQKLFIVLLLFCILRLDA) are cleaved as a signal peptide. Disulfide bonds link C28-C46, C33-C59, and C37-C61.

The protein belongs to the short scorpion toxin superfamily. Potassium channel inhibitor family. Alpha-KTx 23 subfamily. Expressed by the venom gland.

It localises to the secreted. Functionally, may block potassium channels. The sequence is that of Potassium channel toxin alpha-KTx Tx308 from Buthus israelis (Israeli scorpion).